Reading from the N-terminus, the 622-residue chain is DNA mismatch repair protein MutL (622 aa).

Belongs to the DNA mismatch repair MutL/HexB family.

This protein is involved in the repair of mismatches in DNA. It is required for dam-dependent methyl-directed DNA mismatch repair. May act as a 'molecular matchmaker', a protein that promotes the formation of a stable complex between two or more DNA-binding proteins in an ATP-dependent manner without itself being part of a final effector complex. The sequence is that of DNA mismatch repair protein MutL from Actinobacillus pleuropneumoniae serotype 3 (strain JL03).